Here is a 523-residue protein sequence, read N- to C-terminus: Leghemoglobin reductase (523 aa).

Residues 1-30 constitute a mitochondrion transit peptide; the sequence is MAMASLARRKAYAVVSSSRSSVFLTSLRGF. FAD-binding positions include 66-75, K84, G148, and 177-179; these read EKRGTLGGTC and TGS. A disulfide bridge connects residues C75 and C80. Residues 214–221, E237, V271, and G306 each bind NAD(+); that span reads GAGYIGLE. FAD is bound by residues D347 and 353-356; that span reads MLAH. H479 acts as the Proton acceptor in catalysis.

It belongs to the class-I pyridine nucleotide-disulfide oxidoreductase family. Homodimer. FAD serves as cofactor.

The protein resides in the mitochondrion. It catalyses the reaction 2 Fe(III)-[leghemoglobin] + NADH = 2 Fe(II)-[leghemoglobin] + NAD(+) + H(+). The enzyme catalyses 2 Fe(III)-[leghemoglobin] + NADPH = 2 Fe(II)-[leghemoglobin] + NADP(+) + H(+). Reduces ferric leghemoglobin (Lb) to ferrous Lb. The sequence is that of Leghemoglobin reductase (FLBR) from Vigna unguiculata (Cowpea).